The sequence spans 205 residues: Delta-aminolevulinic acid dehydratase (205 aa).

Residues Cys117, Cys119, and Cys127 each coordinate Zn(2+). Lys192 (schiff-base intermediate with substrate) is an active-site residue. Arg202 contacts substrate.

It belongs to the ALAD family. As to quaternary structure, homooctamer. Zn(2+) is required as a cofactor.

The catalysed reaction is 2 5-aminolevulinate = porphobilinogen + 2 H2O + H(+). It participates in porphyrin-containing compound metabolism; protoporphyrin-IX biosynthesis; coproporphyrinogen-III from 5-aminolevulinate: step 1/4. Catalyzes an early step in the biosynthesis of tetrapyrroles. Binds two molecules of 5-aminolevulinate per subunit, each at a distinct site, and catalyzes their condensation to form porphobilinogen. This is Delta-aminolevulinic acid dehydratase (hemB) from Ruminiclostridium josui (Clostridium josui).